The following is a 172-amino-acid chain: Adenine phosphoribosyltransferase (172 aa).

Belongs to the purine/pyrimidine phosphoribosyltransferase family. Homodimer.

The protein resides in the cytoplasm. The enzyme catalyses AMP + diphosphate = 5-phospho-alpha-D-ribose 1-diphosphate + adenine. Its pathway is purine metabolism; AMP biosynthesis via salvage pathway; AMP from adenine: step 1/1. Functionally, catalyzes a salvage reaction resulting in the formation of AMP, that is energically less costly than de novo synthesis. This is Adenine phosphoribosyltransferase from Streptococcus pyogenes serotype M12 (strain MGAS9429).